Consider the following 81-residue polypeptide: Large ribosomal subunit protein bL27 (81 aa).

Residues 1 to 11 are compositionally biased toward polar residues; the sequence is MATSKSGGSSK. The disordered stretch occupies residues 1–21; that stretch reads MATSKSGGSSKNGRDSISKRL.

It belongs to the bacterial ribosomal protein bL27 family.

This is Large ribosomal subunit protein bL27 from Borrelia hermsii (strain HS1 / DAH).